Here is a 252-residue protein sequence, read N- to C-terminus: Probable aquaporin TIP1-2 (252 aa).

Transmembrane regions (helical) follow at residues 24–44 (VAEFISMLIFVFAGSGSGMAF) and 57–77 (GLIAASLAHALALFVAVAVGA). The NPA 1 motif lies at 85–87 (NPA). 3 helical membrane-spanning segments follow: residues 115–137 (VVACLLLKIATGGAAVGAFSLSA), 144–164 (AVVFEIVMTFGLVYTVYATAV), and 173–193 (VIAPIAIGFIVGANILAGGAF). The short motif at 199-201 (NPA) is the NPA 2 element. The chain crosses the membrane as a helical span at residues 220-240 (WLGPFVGAAIAALIYDIIFIG).

The protein belongs to the MIP/aquaporin (TC 1.A.8) family. TIP (TC 1.A.8.10) subfamily. In terms of tissue distribution, expressed in leaves.

The protein localises to the vacuole membrane. Aquaporins facilitate the transport of water and small neutral solutes across cell membranes. May be involved in transport from the vacuolar compartment to the cytoplasm. This chain is Probable aquaporin TIP1-2 (TIP1-2), found in Oryza sativa subsp. japonica (Rice).